The primary structure comprises 556 residues: Man(5)GlcNAc(2)-PP-dolichol translocation protein RFT1 (556 aa).

The next 12 membrane-spanning stretches (helical) occupy residues 10–30 (LLGA…TFGI), 41–61 (EVLG…LFLS), 91–111 (LTVP…LNWL), 129–149 (VAFS…AQVF), 156–176 (ILLN…IVTG), 184–204 (AFAI…YGFF), 353–373 (SVLN…FTFG), 389–409 (FVAG…IYLL), 440–460 (VSFL…GFIF), 461–477 (ANCI…TYYI), 489–509 (LLGL…GIVC), and 517–537 (LATH…SWAL).

Belongs to the RFT1 family.

It is found in the endoplasmic reticulum membrane. The protein operates within protein modification; protein glycosylation. Functionally, intramembrane glycolipid transporter that operates in the biosynthetic pathway of dolichol-linked oligosaccharides, the glycan precursors employed in protein asparagine (N)-glycosylation. The sequential addition of sugars to dolichol pyrophosphate produces dolichol-linked oligosaccharides containing fourteen sugars, including two GlcNAcs, nine mannoses and three glucoses. Once assembled, the oligosaccharide is transferred from the lipid to nascent proteins by oligosaccharyltransferases. The assembly of dolichol-linked oligosaccharides begins on the cytosolic side of the endoplasmic reticulum membrane and finishes in its lumen. RFT1 could mediate the translocation of the cytosolically oriented intermediate DolPP-GlcNAc2Man5, produced by ALG11, into the ER lumen where dolichol-linked oligosaccharides assembly continues. However, the intramembrane lipid transporter activity could not be confirmed in vitro. In Drosophila melanogaster (Fruit fly), this protein is Man(5)GlcNAc(2)-PP-dolichol translocation protein RFT1.